A 325-amino-acid polypeptide reads, in one-letter code: MNRLGSVQRKMPCVFVTEVKAEPSAKREHQPFKVLATETLSEKALDADVYNAVATEKVDGTCCYVTNYKGQPYLWARLDRKPNKQADKRFKKFLHSKENAKEFHWNTEEDFKPVPECWIPAKEIEKQNGKPVPDENGHIPGWVPVEKNSKQYCWHSSVVSYEFGIALVLRHHPDDPGVLEISAVPLSELLEQTLELIGTNINGNPYGLGSKKYPLHFLTPHGAFQVRNLPTLKHNDLLSWFEGCREGQIEGIVWHCGDGCLIKVHRHHLGLCWPLPDTYMNSKPVIINMNLDKYDCAFDHQSLFNKFSKIDKQKFDRLKDITLDI.

Mg(2+) is required as a cofactor. Requires Mn(2+) as cofactor. AMPylates itself (auto-AMPylation).

It catalyses the reaction ATP + (ribonucleotide)n-3'-hydroxyl + 5'-phospho-(ribonucleotide)m = (ribonucleotide)n+m + AMP + diphosphate.. In terms of biological role, functions as an RNA ligase, in vitro. The ligation reaction entails three nucleotidyl transfer steps. In the first step, the RNA ligase reacts with ATP in the absence of nucleic acid to form a covalent ligase-AMP intermediate and release pyrophosphate. In step 2, the ligase-AMP binds to the nucleic acid and transfers the adenylate to the 5'-PO4 terminus to form an adenylylated intermediate. In step 3, the RNA ligase directs the attack of the 3'-OH on the 5'-phosphoanhydride linkage, resulting in a repaired 3'-5' phosphodiester and release of AMP. Exhibits selectivity for single-stranded RNA substrates and may not have nick-sealing activity on double-stranded DNA-RNA hybrids. May play a role in maintaining RNA integrity under stress conditions, for example in response to reactive oxygen species (ROS). This chain is RNA ligase 1, found in Rattus norvegicus (Rat).